A 140-amino-acid chain; its full sequence is Gas vesicle protein O (140 aa).

Residues 1–14 (MSDQGNEHANHDGI) are compositionally biased toward basic and acidic residues. The tract at residues 1-61 (MSDQGNEHAN…DSTIGLSDAQ (61 aa)) is disordered. Positions 39–56 (QTASDEAVSNQSPDSTIG) are enriched in polar residues.

Belongs to the gas vesicle GvpO family. As to quaternary structure, forms homodimers, forms a GvpN-GvpO heterodimer, interacts with GvpC, GvpF, GvpI and GvpL, might interact with GvpA.

The protein localises to the gas vesicle. It is found in the cytoplasm. Its function is as follows. A minor component of the gas vesicle (GV), may play a role in transcription and/or RNA stability and/or in GV assembly. Gas vesicles are small, hollow, gas filled protein structures found in some microorganisms. They allow positioning of halobacteria at the optimal depth for growth in the poorly aerated shallow brine pools of their habitat. Functionally, expression of a 9.5 kb mc-vac DNA fragment containing 2 divergently transcribed regions (gvpD-gvpE-gvpF-gvpG-gvpH-gvpI-gvpJ-gvpK-gvpL-gvpM and gvpA-gvpC-gvpN-gvpO) allows H.volcanii to produce gas vesicles. The chain is Gas vesicle protein O from Haloferax mediterranei (strain ATCC 33500 / DSM 1411 / JCM 8866 / NBRC 14739 / NCIMB 2177 / R-4) (Halobacterium mediterranei).